We begin with the raw amino-acid sequence, 171 residues long: NADH-quinone oxidoreductase subunit I (171 aa).

4Fe-4S ferredoxin-type domains lie at 41 to 71 (LTRDPDGEERCVACNLCAAVCPVDCIALQKT) and 81 to 110 (EFFRINFSRCILCGLCEEACPTYAIQLTPD). The [4Fe-4S] cluster site is built by C51, C54, C57, C61, C90, C93, C96, and C100.

It belongs to the complex I 23 kDa subunit family. NDH-1 is composed of 14 different subunits. Subunits NuoA, H, J, K, L, M, N constitute the membrane sector of the complex. [4Fe-4S] cluster serves as cofactor.

It localises to the cell inner membrane. The enzyme catalyses a quinone + NADH + 5 H(+)(in) = a quinol + NAD(+) + 4 H(+)(out). NDH-1 shuttles electrons from NADH, via FMN and iron-sulfur (Fe-S) centers, to quinones in the respiratory chain. The immediate electron acceptor for the enzyme in this species is believed to be ubiquinone. Couples the redox reaction to proton translocation (for every two electrons transferred, four hydrogen ions are translocated across the cytoplasmic membrane), and thus conserves the redox energy in a proton gradient. The sequence is that of NADH-quinone oxidoreductase subunit I from Methylococcus capsulatus (strain ATCC 33009 / NCIMB 11132 / Bath).